Reading from the N-terminus, the 69-residue chain is Brevinin-1CG5 (69 aa).

Positions 1–22 are cleaved as a signal peptide; that stretch reads MFTLKKSLLLLFFLGTINLSLC. A propeptide spans 23–43 (removed in mature form); that stretch reads EQERNAEEERRDDDEMDVEVE. Cysteine 63 and cysteine 69 form a disulfide bridge.

This sequence belongs to the frog skin active peptide (FSAP) family. Brevinin subfamily. As to expression, expressed by the skin glands.

It is found in the secreted. Antimicrobial peptide active against a variety of Gram-positive and Gram-negative bacterial strains. Has antifungal activity against C.albicans ATCC 10231 and a slime mold isolate. Has hemolytic activity against human erythrocytes. The protein is Brevinin-1CG5 of Amolops chunganensis (Chungan torrent frog).